Reading from the N-terminus, the 200-residue chain is uncharacterized protein (200 aa).

The signal sequence occupies residues 1–24 (MAIDKLPLLLFLSILLCLNRPVLS). Residues Asn-44, Asn-72, Asn-99, Asn-124, and Asn-135 are each glycosylated (N-linked (GlcNAc...) asparagine). Residue Ser-174 is the site of GPI-anchor amidated serine attachment. Residues 175–200 (NGFTFGIGLVSYLVIFMYSSFCFFLF) constitute a propeptide, removed in mature form.

It belongs to the UPF0277 family.

It is found in the cell membrane. This is an uncharacterized protein from Arabidopsis thaliana (Mouse-ear cress).